A 233-amino-acid chain; its full sequence is Orotidine 5'-phosphate decarboxylase (233 aa).

Substrate is bound by residues D11, K33, 60 to 69, T120, R181, Q190, G210, and R211; that span reads DLKFHDIPNT. The active-site Proton donor is K62.

The protein belongs to the OMP decarboxylase family. Type 1 subfamily. As to quaternary structure, homodimer.

The enzyme catalyses orotidine 5'-phosphate + H(+) = UMP + CO2. Its pathway is pyrimidine metabolism; UMP biosynthesis via de novo pathway; UMP from orotate: step 2/2. Catalyzes the decarboxylation of orotidine 5'-monophosphate (OMP) to uridine 5'-monophosphate (UMP). The sequence is that of Orotidine 5'-phosphate decarboxylase from Vibrio parahaemolyticus serotype O3:K6 (strain RIMD 2210633).